The sequence spans 217 residues: tRNA (guanine-N(7)-)-methyltransferase (217 aa).

Residues Glu-44, Glu-69, Asn-96, and Asp-118 each contribute to the S-adenosyl-L-methionine site. Residue Asp-118 is part of the active site. Lys-122 contributes to the substrate binding site. The segment at 124-129 is interaction with RNA; it reads RHEKRR. Substrate-binding positions include Asp-154 and 191–194; that span reads TEYE.

This sequence belongs to the class I-like SAM-binding methyltransferase superfamily. TrmB family.

The catalysed reaction is guanosine(46) in tRNA + S-adenosyl-L-methionine = N(7)-methylguanosine(46) in tRNA + S-adenosyl-L-homocysteine. It participates in tRNA modification; N(7)-methylguanine-tRNA biosynthesis. Its function is as follows. Catalyzes the formation of N(7)-methylguanine at position 46 (m7G46) in tRNA. The chain is tRNA (guanine-N(7)-)-methyltransferase from Geobacillus kaustophilus (strain HTA426).